The primary structure comprises 148 residues: Large ribosomal subunit protein uL15 (148 aa).

The tract at residues 1–57 (MRLHDLYPFPEERKTRKRVGRGSGSGLGCTSGKGNKGQNARAGGGVRPGFEGGQMPL) is disordered. Gly residues-rich tracts occupy residues 21-35 (RGSG…GKGN) and 42-52 (AGGGVRPGFEG).

The protein belongs to the universal ribosomal protein uL15 family. In terms of assembly, part of the 50S ribosomal subunit.

Binds to the 23S rRNA. This is Large ribosomal subunit protein uL15 from Nitratidesulfovibrio vulgaris (strain ATCC 29579 / DSM 644 / CCUG 34227 / NCIMB 8303 / VKM B-1760 / Hildenborough) (Desulfovibrio vulgaris).